A 243-amino-acid polypeptide reads, in one-letter code: Protein IN2-1 homolog A (243 aa).

Positions 31-112 (GTTRLYICYF…YIDSHFEGPA (82 aa)) constitute a GST N-terminal domain. Glutathione-binding positions include lysine 70, valine 84, and 96 to 97 (ES). In terms of domain architecture, GST C-terminal spans 117-240 (DPEKRQFADE…YLLDLAKTHL (124 aa)).

Belongs to the GST superfamily. HSP26 family.

The chain is Protein IN2-1 homolog A from Oryza sativa subsp. japonica (Rice).